The sequence spans 429 residues: UDP-N-acetylglucosamine 1-carboxyvinyltransferase (429 aa).

A phosphoenolpyruvate-binding site is contributed by 22–23; sequence KN. Arg-102 is a UDP-N-acetyl-alpha-D-glucosamine binding site. Cys-126 functions as the Proton donor in the catalytic mechanism. 2-(S-cysteinyl)pyruvic acid O-phosphothioketal is present on Cys-126. Residues 131-135, Asp-316, and Ile-338 contribute to the UDP-N-acetyl-alpha-D-glucosamine site; that span reads RPVDL.

It belongs to the EPSP synthase family. MurA subfamily.

The protein resides in the cytoplasm. It catalyses the reaction phosphoenolpyruvate + UDP-N-acetyl-alpha-D-glucosamine = UDP-N-acetyl-3-O-(1-carboxyvinyl)-alpha-D-glucosamine + phosphate. The protein operates within cell wall biogenesis; peptidoglycan biosynthesis. In terms of biological role, cell wall formation. Adds enolpyruvyl to UDP-N-acetylglucosamine. In Methylobacterium radiotolerans (strain ATCC 27329 / DSM 1819 / JCM 2831 / NBRC 15690 / NCIMB 10815 / 0-1), this protein is UDP-N-acetylglucosamine 1-carboxyvinyltransferase.